The chain runs to 361 residues: Homeobox protein knotted-1-like 6 (361 aa).

Residues valine 11–glutamine 48 form a disordered region. The segment covering glycine 19–proline 28 has biased composition (basic residues). One can recognise an ELK domain in the interval glutamate 242 to leucine 262. Positions serine 263–serine 326 form a DNA-binding region, homeobox; TALE-type.

Belongs to the TALE/KNOX homeobox family. As to quaternary structure, interacts with FTIP7. Expressed predominantly in shoot apices. Also found to a lesser extent in glumes.

The protein localises to the nucleus. It is found in the cytoplasm. Its function is as follows. Transcription factor that regulates genes involved in development. May be involved in shoot formation during embryogenesis. Overexpression in transgenic plants causes altered leaf morphology. Regulates anther dehiscence via direct repression of the auxin biosynthetic gene YUCCA4. Binds to the DNA sequence 5'-TGAC-3' in the promoter of the YUCCA4 gene and represses its activity during anther development. Reduction of auxin levels at late stage of anther development, after meiosis of microspore mother cells, is necessary for normal anther dehiscence and seed setting. The chain is Homeobox protein knotted-1-like 6 (OSH1) from Oryza sativa subsp. japonica (Rice).